A 449-amino-acid chain; its full sequence is Intestinal acid phosphatase (449 aa).

The signal sequence occupies residues 1-19; that stretch reads MVSAISIVAIFALEGFVTT. Residues 20 to 428 are Extracellular-facing; sequence YSDGTKDLVF…TDLNKSSSFA (409 aa). Residue H36 is the Nucleophile of the active site. Residue D321 is the Proton donor of the active site. Residues 429–449 traverse the membrane as a helical segment; sequence TVSMLFIAAILAINNNFLGLF.

The protein belongs to the histidine acid phosphatase family. As to quaternary structure, homodimer. The N-terminus is blocked. In terms of tissue distribution, expressed in the intestine, specifically on the edge of the gut lumen, in the 14 posterior cells of the intestine.

The protein localises to the membrane. It catalyses the reaction a phosphate monoester + H2O = an alcohol + phosphate. Functionally, acid phosphatase required for normal growth and development. Specifically required for normal gut differentiation. This Caenorhabditis elegans protein is Intestinal acid phosphatase.